A 650-amino-acid polypeptide reads, in one-letter code: Threonine--tRNA ligase (650 aa).

The TGS domain maps to 1-66 (MVQITLPDGS…DQDAKLAIVT (66 aa)). A catalytic region spans residues 247 to 538 (DHRKIGRDLD…LIENHAGAMP (292 aa)). The Zn(2+) site is built by cysteine 338, histidine 389, and histidine 515.

The protein belongs to the class-II aminoacyl-tRNA synthetase family. In terms of assembly, homodimer. Requires Zn(2+) as cofactor.

The protein localises to the cytoplasm. It catalyses the reaction tRNA(Thr) + L-threonine + ATP = L-threonyl-tRNA(Thr) + AMP + diphosphate + H(+). Catalyzes the attachment of threonine to tRNA(Thr) in a two-step reaction: L-threonine is first activated by ATP to form Thr-AMP and then transferred to the acceptor end of tRNA(Thr). Also edits incorrectly charged L-seryl-tRNA(Thr). This is Threonine--tRNA ligase from Bordetella avium (strain 197N).